The primary structure comprises 470 residues: Aminoacyl transferase sphA (470 aa).

3 residues coordinate pyridoxal 5'-phosphate: Ser212, His244, and Thr272. Residue Lys275 is modified to N6-(pyridoxal phosphate)lysine.

It belongs to the class-II pyridoxal-phosphate-dependent aminotransferase family. BioF subfamily. In terms of assembly, homodimer. Requires pyridoxal 5'-phosphate as cofactor.

The catalysed reaction is aminomalonate + (3R)-hydroxyoctadeca-4,10-dienoyl-[ACP] = 3-oxopresphingofungin + holo-[ACP] + CO2. It functions in the pathway secondary metabolite biosynthesis. In terms of biological role, aminoacyl transferase; part of the gene cluster that mediates the biosynthesis of sphingofungins, bioactive molecules acting as sphingolipid inhibitors via inhibiting serine palmitoyl transferase (SPT). Within the pathway, sphA transfers aminomalonate onto the sphB product 3-hydroxyoctadeca-4,10-dienoyl-ACP to produce 3-keto-presphingofungin. The substrate specificity of sphA using only aminomalonate in Aspergillus fumigatus is responsible for the biosynthesis of sphingofungins B and C but not E and F like in Byssochlamys spectabilis. The PKS sphB does not contain any putative thioesterase domain for releasing the nascent polyketide chain and it has been suggested that aminoacyl transferases can facilitate the polyketide chain release. Sphingofungin biosynthesis starts with the PKS sphB that produces an C18 polyketide precursor 3-hydroxyoctadeca-4,10-dienoyl-ACP containing one delta-6 desaturation and one delta-12 desaturation. The aminoacyl transferase sphA uses the sphB product to produce 3-keto-presphingofungin by adding an aminomalonate molecule. SphF then reduces the C-3 ketone of 3-keto-presphingofungin which leads to presphingofungin. The cytochrome P450 monooxygenase sphH converts presphingofungin into sphingofungin B1 which is further converted to sphingofungin B by the dioxygenase sphC. SphC is also able to convert presphingofungin into sphingofungin B2. The acetyltransferase sphE acetylates sphingofungin B to produce sphingofungin C, but can also convert sphingofungin B1 into sphingofungin C1 and sphingofungin B2 into sphingofungin C2. Finally, sphingofungin C can be spontaneously converted into sphingofungin D. The polypeptide is Aminoacyl transferase sphA (Aspergillus fumigatus (strain CBS 144.89 / FGSC A1163 / CEA10) (Neosartorya fumigata)).